Here is a 180-residue protein sequence, read N- to C-terminus: UDP-4-amino-4,6-dideoxy-N-acetyl-beta-L-altrosamine N-acetyltransferase (180 aa).

One can recognise an N-acetyltransferase domain in the interval 13-169 (IDFTNLNDGE…IDVLLYYKDK (157 aa)).

It catalyses the reaction UDP-4-amino-4,6-dideoxy-N-acetyl-beta-L-altrosamine + acetyl-CoA = UDP-2,4-diacetamido-2,4,6-trideoxy-beta-L-altrose + CoA + H(+). In terms of biological role, catalyzes the third step in the biosynthesis of pseudaminic acid, a sialic-acid-like sugar that is used to modify flagellin. Mediates N-4 acetylation of UDP-4-amino-4,6-dideoxy-beta-L-AltNAc to form UDP-2,4-diacetamido-2,4,6-trideoxy-beta-L-altropyranose. The protein is UDP-4-amino-4,6-dideoxy-N-acetyl-beta-L-altrosamine N-acetyltransferase (pseH) of Helicobacter pylori (strain ATCC 700392 / 26695) (Campylobacter pylori).